A 211-amino-acid polypeptide reads, in one-letter code: Protein 33K (211 aa).

Disordered regions lie at residues 1–95 and 107–140; these read MPPK…PCSL and AGSP…QDSP. Acidic residues predominate over residues 24-65; sequence DEEETWDDSQAEEVSDEEAEEQMESWDSLDEEDLEDVEEETI. Residues 83–92 are compositionally biased toward pro residues; the sequence is KTIPPLPPQP. Residues 129-140 are compositionally biased toward polar residues; the sequence is TSSAIATRQDSP. The segment at 154–181 is necessary for nuclear subcellular location; sequence YAIFQQSRGQQLELKVKNRSLRSLTRSC. Residues 160-180 form an RS-repeat; required for splicing enhancer activity region; that stretch reads SRGQQLELKVKNRSLRSLTRS.

It belongs to the adenoviridae splicing factor family. As to quaternary structure, homooligomer. Interacts with DBP; this interaction occurs at a unique vertex during genome packaging. Interacts with IVa2; this interaction occurs at a unique vertex during genome packaging and seems to potentiate IVa2 and 33K oligomerization. Post-translationally, phosphorylated in vitro by human PKA and PRKDC. PRKDC inhibits, whereas PKA activates the splicing factor.

The protein localises to the host nucleus. Promotes alternative splicing of late transcripts by promoting splicing at weak 3' splice sites. Required for the temporal activation of major late pre-mRNA splicing at late times of infection. Induces the splicing and expression of the late capsid vertex protein. In terms of biological role, probably functions as the small terminase that is part of the molecular motor that translocates genomic DNA in empty capsid during DNA packaging. This motor is located at a unique vertex and comprises at least the IVa2 ATPase, the small terminase 33K and probably a portal. Forms a ring-like structure of about 17 nm in which genomic DNA is translocated into the capsid. Stimulates IVa2 ATPase activity in the presence of the viral genome. Once the DNA is packaged, the terminase detaches: the 33K protein is present in the empty particles, but not in the mature virions. Also involved in virion assembly. This is Protein 33K from Human adenovirus F serotype 40 (HAdV-40).